Here is a 445-residue protein sequence, read N- to C-terminus: Histidinol dehydrogenase (445 aa).

3 residues coordinate NAD(+): Tyr144, Gln205, and Asn228. Substrate-binding residues include Ser251, Gln273, and His276. 2 residues coordinate Zn(2+): Gln273 and His276. Active-site proton acceptor residues include Glu341 and His342. Residues His342, Asp375, Glu429, and His434 each coordinate substrate. Residue Asp375 coordinates Zn(2+). His434 contacts Zn(2+).

Belongs to the histidinol dehydrogenase family. Zn(2+) is required as a cofactor.

It catalyses the reaction L-histidinol + 2 NAD(+) + H2O = L-histidine + 2 NADH + 3 H(+). It participates in amino-acid biosynthesis; L-histidine biosynthesis; L-histidine from 5-phospho-alpha-D-ribose 1-diphosphate: step 9/9. Catalyzes the sequential NAD-dependent oxidations of L-histidinol to L-histidinaldehyde and then to L-histidine. The polypeptide is Histidinol dehydrogenase (Cupriavidus pinatubonensis (strain JMP 134 / LMG 1197) (Cupriavidus necator (strain JMP 134))).